A 1143-amino-acid chain; its full sequence is uncharacterized protein (1143 aa).

An N-terminal signal peptide occupies residues 1–20 (MKLLLLALILVLSNINLISG). Over 21–1121 (NGLVWPHPRL…PAAGGEDSSA (1101 aa)) the chain is Extracellular. The segment covering 177–203 (NSGGSWSSGGSGNSGGGWSSGGSGNSG) has biased composition (gly residues). Residues 177–1120 (NSGGSWSSGG…EPAAGGEDSS (944 aa)) are disordered. A compositionally biased stretch (low complexity) spans 222-236 (SSGGWTSGSHSSGSW). Positions 237–283 (SSGGGSGSSSGGQSSGSWSSGGGSSSGGHSSGSWSSGGGSSAGGGSS) are enriched in gly residues. The span at 284-296 (SGSHSSGSWSSGG) shows a compositional bias: low complexity. Gly residues predominate over residues 297–330 (SSSGGQSSGSWSSGGGSSSGGQSSGSWSSGGGSS). Over residues 331-368 (SGSHSSGSWSSGGSSSGSHSSGSWSSGGSSSSSGNSGW) the composition is skewed to low complexity. The span at 374 to 392 (GNTGGNTGGNTGGNTGGQS) shows a compositional bias: gly residues. Low complexity predominate over residues 393–403 (SGNSGWMTASG). Gly residues-rich tracts occupy residues 404–418 (GNTG…GGQS) and 430–444 (GNTG…GGQS). Low complexity-rich tracts occupy residues 445-498 (SGSS…TSSG) and 506-541 (GSSS…SSGD). Composition is skewed to gly residues over residues 555–573 (GNTG…GGNS), 580–596 (GNSG…GGNS), 604–622 (GNTG…GGNS), 629–783 (GNSG…GGNS), 790–843 (GNSG…GGAS), and 851–905 (GNSG…GGNS). The span at 906–1059 (GAATGANSGA…GGNGASGAAN (154 aa)) shows a compositional bias: low complexity. Residues 1062-1078 (SIVTPNDQNVSPLSNSD) show a composition bias toward polar residues. The span at 1094-1114 (PTSRAPTVTPTPTSSAEEPAA) shows a compositional bias: low complexity. A helical membrane pass occupies residues 1122 to 1142 (ISKYSIQSFGIFVLSMIIYLV). A topological domain (cytoplasmic) is located at residue Ile-1143.

The protein resides in the membrane. This is an uncharacterized protein from Dictyostelium discoideum (Social amoeba).